The sequence spans 469 residues: UDP-glycosyltransferase 43 (469 aa).

Residues Ser-280, 345 to 346 (WV), 363 to 371 (HCGWNSILE), and 385 to 388 (YSEQ) contribute to the UDP-alpha-D-glucose site.

The protein belongs to the UDP-glycosyltransferase family.

With respect to regulation, inhibited by Cu(2+) or Zn(2+). Glycosyltransferase that catalyzes the C-glucosylation of daidzein to puerarin. Shows activity with the isoflavones daidzein and genistein, but has no activity towards flavonoids such as 2-hydroxynaringenin. Can use UDP-glucose, but not UDP-galactose or UDP-glucuronic acid as sugar donor. Does not require bivalent cations for activity. This Pueraria montana var. lobata (Kudzu vine) protein is UDP-glycosyltransferase 43.